A 233-amino-acid polypeptide reads, in one-letter code: Large ribosomal subunit protein uL1 (233 aa).

Belongs to the universal ribosomal protein uL1 family. As to quaternary structure, part of the 50S ribosomal subunit.

Binds directly to 23S rRNA. The L1 stalk is quite mobile in the ribosome, and is involved in E site tRNA release. Its function is as follows. Protein L1 is also a translational repressor protein, it controls the translation of the L11 operon by binding to its mRNA. The polypeptide is Large ribosomal subunit protein uL1 (Parvibaculum lavamentivorans (strain DS-1 / DSM 13023 / NCIMB 13966)).